The following is a 380-amino-acid chain: 3-dehydroquinate synthase (380 aa).

NAD(+) contacts are provided by residues 100–104 (GAASD), 124–125 (TT), Lys137, and Lys146. The Zn(2+) site is built by Glu179, His251, and His267. The interval 320-343 (YMQRDKKNMQSNDTDSDKDSREMP) is disordered.

This sequence belongs to the sugar phosphate cyclases superfamily. Dehydroquinate synthase family. It depends on NAD(+) as a cofactor. The cofactor is Co(2+). Zn(2+) is required as a cofactor.

It localises to the cytoplasm. The enzyme catalyses 7-phospho-2-dehydro-3-deoxy-D-arabino-heptonate = 3-dehydroquinate + phosphate. The protein operates within metabolic intermediate biosynthesis; chorismate biosynthesis; chorismate from D-erythrose 4-phosphate and phosphoenolpyruvate: step 2/7. Catalyzes the conversion of 3-deoxy-D-arabino-heptulosonate 7-phosphate (DAHP) to dehydroquinate (DHQ). This Tropheryma whipplei (strain Twist) (Whipple's bacillus) protein is 3-dehydroquinate synthase.